We begin with the raw amino-acid sequence, 352 residues long: Ribosomal RNA large subunit methyltransferase M (352 aa).

S-adenosyl-L-methionine contacts are provided by residues S184, A217–G220, D236, D256, and D272. The Proton acceptor role is filled by K301.

The protein belongs to the class I-like SAM-binding methyltransferase superfamily. RNA methyltransferase RlmE family. RlmM subfamily. Monomer.

The protein resides in the cytoplasm. It catalyses the reaction cytidine(2498) in 23S rRNA + S-adenosyl-L-methionine = 2'-O-methylcytidine(2498) in 23S rRNA + S-adenosyl-L-homocysteine + H(+). Its function is as follows. Catalyzes the 2'-O-methylation at nucleotide C2498 in 23S rRNA. This chain is Ribosomal RNA large subunit methyltransferase M, found in Pseudomonas aeruginosa (strain UCBPP-PA14).